The following is a 43-amino-acid chain: Protein PsbN (43 aa).

A helical membrane pass occupies residues 5 to 27; the sequence is TLVAISISRLLVSFTGYALYTAF.

Belongs to the PsbN family.

It localises to the plastid. The protein resides in the chloroplast thylakoid membrane. In terms of biological role, may play a role in photosystem I and II biogenesis. In Cycas taitungensis (Prince sago), this protein is Protein PsbN.